The sequence spans 244 residues: Phosphoadenosine 5'-phosphosulfate reductase (244 aa).

Cys-239 (nucleophile; cysteine thiosulfonate intermediate) is an active-site residue.

This sequence belongs to the PAPS reductase family. CysH subfamily.

The protein resides in the cytoplasm. The enzyme catalyses [thioredoxin]-disulfide + sulfite + adenosine 3',5'-bisphosphate + 2 H(+) = [thioredoxin]-dithiol + 3'-phosphoadenylyl sulfate. The protein operates within sulfur metabolism; hydrogen sulfide biosynthesis; sulfite from sulfate: step 3/3. In terms of biological role, catalyzes the formation of sulfite from phosphoadenosine 5'-phosphosulfate (PAPS) using thioredoxin as an electron donor. The polypeptide is Phosphoadenosine 5'-phosphosulfate reductase (Escherichia coli O157:H7).